Here is a 186-residue protein sequence, read N- to C-terminus: Lipoprotein signal peptidase (186 aa).

The next 4 membrane-spanning stretches (helical) occupy residues 8 to 28, 44 to 64, 66 to 86, and 97 to 117; these read FFSV…FLDL, IPVL…FVFG, FQDN…FLIF, and AWGW…KFFV. Active-site residues include Asp142 and Asp164. A helical transmembrane segment spans residues 157–177; sequence WPAFNVADSCVSIGIVILLFT.

The protein belongs to the peptidase A8 family.

Its subcellular location is the cell inner membrane. The catalysed reaction is Release of signal peptides from bacterial membrane prolipoproteins. Hydrolyzes -Xaa-Yaa-Zaa-|-(S,diacylglyceryl)Cys-, in which Xaa is hydrophobic (preferably Leu), and Yaa (Ala or Ser) and Zaa (Gly or Ala) have small, neutral side chains.. Its pathway is protein modification; lipoprotein biosynthesis (signal peptide cleavage). Functionally, this protein specifically catalyzes the removal of signal peptides from prolipoproteins. The sequence is that of Lipoprotein signal peptidase from Leptospira biflexa serovar Patoc (strain Patoc 1 / ATCC 23582 / Paris).